We begin with the raw amino-acid sequence, 179 residues long: Large ribosomal subunit protein uL5 (179 aa).

Belongs to the universal ribosomal protein uL5 family. As to quaternary structure, part of the 50S ribosomal subunit; part of the 5S rRNA/L5/L18/L25 subcomplex. Contacts the 5S rRNA and the P site tRNA. Forms a bridge to the 30S subunit in the 70S ribosome.

In terms of biological role, this is one of the proteins that bind and probably mediate the attachment of the 5S RNA into the large ribosomal subunit, where it forms part of the central protuberance. In the 70S ribosome it contacts protein S13 of the 30S subunit (bridge B1b), connecting the 2 subunits; this bridge is implicated in subunit movement. Contacts the P site tRNA; the 5S rRNA and some of its associated proteins might help stabilize positioning of ribosome-bound tRNAs. The protein is Large ribosomal subunit protein uL5 of Buchnera aphidicola subsp. Baizongia pistaciae (strain Bp).